The sequence spans 278 residues: Shikimate dehydrogenase (NADP(+)) (278 aa).

Residues 19-21 (SRS) and T66 each bind shikimate. The Proton acceptor role is filled by K70. NADP(+) is bound at residue D82. Residues N91 and D107 each coordinate shikimate. NADP(+) contacts are provided by residues 133 to 137 (GAGGA), 157 to 162 (NRTRAK), and I222. Residue Y224 coordinates shikimate. G245 is an NADP(+) binding site.

The protein belongs to the shikimate dehydrogenase family. As to quaternary structure, homodimer.

The enzyme catalyses shikimate + NADP(+) = 3-dehydroshikimate + NADPH + H(+). It participates in metabolic intermediate biosynthesis; chorismate biosynthesis; chorismate from D-erythrose 4-phosphate and phosphoenolpyruvate: step 4/7. Functionally, involved in the biosynthesis of the chorismate, which leads to the biosynthesis of aromatic amino acids. Catalyzes the reversible NADPH linked reduction of 3-dehydroshikimate (DHSA) to yield shikimate (SA). The protein is Shikimate dehydrogenase (NADP(+)) of Dinoroseobacter shibae (strain DSM 16493 / NCIMB 14021 / DFL 12).